The chain runs to 261 residues: Succinate dehydrogenase iron-sulfur subunit (261 aa).

The region spanning Arg28–Met119 is the 2Fe-2S ferredoxin-type domain. Cys80, Cys85, and Cys100 together coordinate [2Fe-2S] cluster. One can recognise a 4Fe-4S ferredoxin-type domain in the interval Asp161–Tyr191. [4Fe-4S] cluster is bound by residues Cys171, Cys174, and Cys177. Cys181 contacts [3Fe-4S] cluster. Trp186 lines the a ubiquinone pocket. Residues Cys228 and Cys234 each coordinate [3Fe-4S] cluster. Cys238 lines the [4Fe-4S] cluster pocket.

Belongs to the succinate dehydrogenase/fumarate reductase iron-sulfur protein family. As to quaternary structure, part of an enzyme complex containing four subunits: a flavoprotein, an iron-sulfur, cytochrome b-556, and a hydrophobic anchor protein. Requires [2Fe-2S] cluster as cofactor. The cofactor is [3Fe-4S] cluster. [4Fe-4S] cluster is required as a cofactor.

The catalysed reaction is a quinone + succinate = fumarate + a quinol. It functions in the pathway carbohydrate metabolism; tricarboxylic acid cycle; fumarate from succinate (bacterial route): step 1/1. This Rickettsia prowazekii (strain Madrid E) protein is Succinate dehydrogenase iron-sulfur subunit (sdhB).